A 317-amino-acid chain; its full sequence is Acetyl-coenzyme A carboxylase carboxyl transferase subunit alpha (317 aa).

Residues 40–293 form the CoA carboxyltransferase C-terminal domain; sequence LEGRVRDAMV…EAVIGDALKE (254 aa).

This sequence belongs to the AccA family. As to quaternary structure, acetyl-CoA carboxylase is a heterohexamer composed of biotin carboxyl carrier protein (AccB), biotin carboxylase (AccC) and two subunits each of ACCase subunit alpha (AccA) and ACCase subunit beta (AccD).

The protein localises to the cytoplasm. The enzyme catalyses N(6)-carboxybiotinyl-L-lysyl-[protein] + acetyl-CoA = N(6)-biotinyl-L-lysyl-[protein] + malonyl-CoA. It participates in lipid metabolism; malonyl-CoA biosynthesis; malonyl-CoA from acetyl-CoA: step 1/1. Functionally, component of the acetyl coenzyme A carboxylase (ACC) complex. First, biotin carboxylase catalyzes the carboxylation of biotin on its carrier protein (BCCP) and then the CO(2) group is transferred by the carboxyltransferase to acetyl-CoA to form malonyl-CoA. This chain is Acetyl-coenzyme A carboxylase carboxyl transferase subunit alpha, found in Sinorhizobium medicae (strain WSM419) (Ensifer medicae).